The chain runs to 414 residues: MSYYIAPRFLDKLAVHITKNFLNIPGVRVPLILGIHGRKGEGKTFQCELAFEKMGIEVTLISGGELESPDAGDPARLIRLRYRETAELIKVRGKMCVLMINDLDAGAGRFDEGTQYTVNTQLVNATLMNIADNPTDVQLPGSYDSNPIRRVPIIVTGNDFSTLYAPLIRDGRMEKFYWEPNRDDKVGIVGGIFAEDGLSQREIEQLVDTFPKQSIDFFSALRSRIYDIQIRDFIHKVGFERISLRVVNSLEAPPEFKKPDFSLAHLIESGNLVLGEQQRVDNSQLVDEYNRLNRGRGYQTAPPPEAPVIQPVNNSSHKQKTSNTHLSLETQEQIRQILSQGHKITFEHVDARRFRTGSWQSCGTLHIDAESDAISTLEACLVDYDGEYVRMVGIDPKGKRRVVETIIQRPNGKN.

37 to 44 contributes to the ATP binding site; the sequence is GRKGEGKT. The tract at residues 296-326 is disordered; sequence RGYQTAPPPEAPVIQPVNNSSHKQKTSNTHL. Positions 311–326 are enriched in polar residues; the sequence is PVNNSSHKQKTSNTHL.

Belongs to the RuBisCO activase family.

Functionally, activation of RuBisCO (ribulose-1,5-bisohosphate carboxylase/oxygenase; EC 4.1.1.39) involves the ATP-dependent carboxylation of the epsilon-amino group of lysine leading to a carbamate structure. In Nostoc sp. (strain PCC 7120 / SAG 25.82 / UTEX 2576), this protein is Ribulose bisphosphate carboxylase/oxygenase activase (rca).